Here is a 492-residue protein sequence, read N- to C-terminus: Cytochrome P450 26A1 (492 aa).

A heme-binding site is contributed by cysteine 437.

Belongs to the cytochrome P450 family. Heme serves as cofactor. In terms of tissue distribution, expressed primarily in ovary, brain and eyes.

Its subcellular location is the endoplasmic reticulum membrane. It is found in the microsome membrane. It carries out the reaction all-trans-retinoate + reduced [NADPH--hemoprotein reductase] + O2 = all-trans-(4S)-hydroxyretinoate + oxidized [NADPH--hemoprotein reductase] + H2O + H(+). In terms of biological role, a cytochrome P450 monooxygenase involved in the metabolism of all-trans retinoic acid (atRA), a signaling molecule that binds to retinoic acid receptors and regulates gene transcription. May regulate at-RA signaling during hindbrain development. Mechanistically, uses molecular oxygen inserting one oxygen atom into a substrate, and reducing the second into a water molecule, with two electrons provided by NADPH via cytochrome P450 reductase (CPR; NADPH-ferrihemoprotein reductase). Catalyzes the hydroxylation of carbon hydrogen bonds of atRA primarily at C-4. Has no activity toward 9-cis and 13-cis retinoic acid stereoisomers. May play a role in the oxidative metabolism of xenobiotics such as tazarotenic acid. This is Cytochrome P450 26A1 (cyp26a1) from Xenopus laevis (African clawed frog).